Reading from the N-terminus, the 212-residue chain is Glycerol-3-phosphate acyltransferase (212 aa).

Helical transmembrane passes span 3–23 (ILLA…VIVS), 51–71 (KAAI…VWLA), 78–98 (DVAI…PVFF), 115–135 (AVHP…AFFF), and 139–159 (SLAA…LFGT).

Belongs to the PlsY family. In terms of assembly, probably interacts with PlsX.

The protein localises to the cell inner membrane. The enzyme catalyses an acyl phosphate + sn-glycerol 3-phosphate = a 1-acyl-sn-glycero-3-phosphate + phosphate. The protein operates within lipid metabolism; phospholipid metabolism. Catalyzes the transfer of an acyl group from acyl-phosphate (acyl-PO(4)) to glycerol-3-phosphate (G3P) to form lysophosphatidic acid (LPA). This enzyme utilizes acyl-phosphate as fatty acyl donor, but not acyl-CoA or acyl-ACP. The polypeptide is Glycerol-3-phosphate acyltransferase (Burkholderia multivorans (strain ATCC 17616 / 249)).